Consider the following 305-residue polypeptide: MSKKLTFQEIILTLQQYWNDQGCMLMQAYDNEKGAGTMSPYTFLRAIGPEPWNAAYVEPSRRPADGRYGENPNRLYQHHQFQVVMKPSPSNIQELYLESLEKLGINPLEHDVRFVEDNWENPSTGSAGLGWEVWLDGMEITQFTYFQQVGGLATGPVTAEVTYGLERLASYIQEVDSVYDIEWAPGVKYGEIFLQPEYEHSKYSFEVSDQDMLLENFEKFEKEAGRALELGLVHPAYDYVLKCSHTFNLLDARGAVSVTERAGYIARIRNLARVVAKTFVAERKKLGYPLLDEATRKKLLAEEEE.

This sequence belongs to the class-II aminoacyl-tRNA synthetase family. Tetramer of two alpha and two beta subunits.

It localises to the cytoplasm. The enzyme catalyses tRNA(Gly) + glycine + ATP = glycyl-tRNA(Gly) + AMP + diphosphate. This is Glycine--tRNA ligase alpha subunit from Streptococcus thermophilus (strain CNRZ 1066).